A 349-amino-acid chain; its full sequence is NADH-quinone oxidoreductase subunit H (349 aa).

8 helical membrane-spanning segments follow: residues 19–39, 88–108, 123–143, 161–181, 202–222, 249–269, 284–304, and 325–345; these read VWTLTKIVAIIAPLMLCVAYL, GLFILGPILAIAPSLAAWAVV, LLFLLAITSVEVYGVIIAGWA, VSYEVAMGFALICVLLISASL, FLSWNWIPLFPMFIVFLISGI, GMAFALFFLAEYANMILVSIL, FLPDGFFWLALKTAFFLFVFL, and VFIPITLVWVIVVAVWMMSPL.

The protein belongs to the complex I subunit 1 family. NDH-1 is composed of 14 different subunits. Subunits NuoA, H, J, K, L, M, N constitute the membrane sector of the complex.

The protein localises to the cell inner membrane. It carries out the reaction a quinone + NADH + 5 H(+)(in) = a quinol + NAD(+) + 4 H(+)(out). NDH-1 shuttles electrons from NADH, via FMN and iron-sulfur (Fe-S) centers, to quinones in the respiratory chain. The immediate electron acceptor for the enzyme in this species is believed to be ubiquinone. Couples the redox reaction to proton translocation (for every two electrons transferred, four hydrogen ions are translocated across the cytoplasmic membrane), and thus conserves the redox energy in a proton gradient. This subunit may bind ubiquinone. The chain is NADH-quinone oxidoreductase subunit H from Aromatoleum aromaticum (strain DSM 19018 / LMG 30748 / EbN1) (Azoarcus sp. (strain EbN1)).